Here is a 437-residue protein sequence, read N- to C-terminus: MAEPGTYGRSSLVQVDCRVHELLLRQRRQERTMLKLIASENFASSAVLEATGSIFANKYAEGYPGARYYAGNEIVDELETLAIERLKALFGSEHANVQPYSGSPANQAVYRALLSPRDKVMGLPLPEGGHLTHGWSVNFSGTDYQRVPYGLHDKTQQIDYDRLRETARRERPKLIWVGGTSYPRVFDYAAMAEIALEANSYLVADIAHISGLIVAGAHPNPVVHCDVVTSTSHKSIRGPRGGFILSKNEDRYQALYHSTSKHNLAKRIDRAVFPQLQGGPHMNTIAALAVALQEAATPSFRTYGHQIVKNAKALAEALLGRGYYLVTGGTDNHMLILDLRDRPLSGKAYAERLARAGIITNFDMVPGDPRDPTVTSGIRLGSPAVTSMGMREAEMVQIAAFIDSVCRQPDDQEVHASVRRDVADFCTAFDVPGISDR.

Residues leucine 125 and 129 to 131 (GHL) each bind (6S)-5,6,7,8-tetrahydrofolate. Lysine 234 is subject to N6-(pyridoxal phosphate)lysine.

This sequence belongs to the SHMT family. As to quaternary structure, homodimer. It depends on pyridoxal 5'-phosphate as a cofactor.

Its subcellular location is the cytoplasm. The enzyme catalyses (6R)-5,10-methylene-5,6,7,8-tetrahydrofolate + glycine + H2O = (6S)-5,6,7,8-tetrahydrofolate + L-serine. It participates in one-carbon metabolism; tetrahydrofolate interconversion. Its pathway is amino-acid biosynthesis; glycine biosynthesis; glycine from L-serine: step 1/1. Functionally, catalyzes the reversible interconversion of serine and glycine with tetrahydrofolate (THF) serving as the one-carbon carrier. This reaction serves as the major source of one-carbon groups required for the biosynthesis of purines, thymidylate, methionine, and other important biomolecules. Also exhibits THF-independent aldolase activity toward beta-hydroxyamino acids, producing glycine and aldehydes, via a retro-aldol mechanism. This Mesorhizobium japonicum (strain LMG 29417 / CECT 9101 / MAFF 303099) (Mesorhizobium loti (strain MAFF 303099)) protein is Serine hydroxymethyltransferase 2.